A 243-amino-acid polypeptide reads, in one-letter code: 7-carboxy-7-deazaguanine synthase (243 aa).

Residues 15 to 17 (IQG) and R30 each bind substrate. The region spanning 21–239 (VIGQKTMFVR…PQLHTLLWGN (219 aa)) is the Radical SAM core domain. Positions 34, 38, and 41 each coordinate [4Fe-4S] cluster. Mg(2+) is bound at residue S43. S81 serves as a coordination point for substrate. S-adenosyl-L-methionine-binding positions include G83 and 127–129 (SPK).

The protein belongs to the radical SAM superfamily. 7-carboxy-7-deazaguanine synthase family. Homodimer. It depends on [4Fe-4S] cluster as a cofactor. The cofactor is S-adenosyl-L-methionine. Mg(2+) serves as cofactor.

The catalysed reaction is 6-carboxy-5,6,7,8-tetrahydropterin + H(+) = 7-carboxy-7-deazaguanine + NH4(+). The protein operates within purine metabolism; 7-cyano-7-deazaguanine biosynthesis. Its function is as follows. Catalyzes the complex heterocyclic radical-mediated conversion of 6-carboxy-5,6,7,8-tetrahydropterin (CPH4) to 7-carboxy-7-deazaguanine (CDG), a step common to the biosynthetic pathways of all 7-deazapurine-containing compounds. The protein is 7-carboxy-7-deazaguanine synthase of Bacillus subtilis (strain 168).